A 313-amino-acid chain; its full sequence is Protoheme IX farnesyltransferase (313 aa).

Transmembrane regions (helical) follow at residues 32 to 52 (VMSLVVFTALVGMLLAPGDFH), 53 to 73 (PVLAVTAMLCIAVGGGAAGAL), 120 to 140 (VLVNWIAAALLAFTIFFYVVI), 153 to 173 (IVIGGAAGALPPVVAWAAVTG), 180 to 200 (LLLFAIIFFWTPPHFWALALF), 226 to 246 (ILLYTIVLVAVAAAPWPLGYF), 248 to 268 (AVYGIASLALGGWMLVLAIRV), and 284 to 304 (LFKFSILYLFALFSILLIEVV).

This sequence belongs to the UbiA prenyltransferase family. Protoheme IX farnesyltransferase subfamily.

Its subcellular location is the cell inner membrane. It carries out the reaction heme b + (2E,6E)-farnesyl diphosphate + H2O = Fe(II)-heme o + diphosphate. It functions in the pathway porphyrin-containing compound metabolism; heme O biosynthesis; heme O from protoheme: step 1/1. Its function is as follows. Converts heme B (protoheme IX) to heme O by substitution of the vinyl group on carbon 2 of heme B porphyrin ring with a hydroxyethyl farnesyl side group. This Rhodopseudomonas palustris (strain BisB5) protein is Protoheme IX farnesyltransferase.